Here is a 923-residue protein sequence, read N- to C-terminus: Periplasmic nitrate reductase (923 aa).

Positions 1–30 (MNRRDFIKNTAIASAASVAGLSVPSSMLGA) form a signal peptide, tat-type signal. Residues 34–90 (WKWDKAVCRFCGTGCGIMIARKDGKIVATKGDPAAPVNRGLNCIKGYFNAKIMYGED) enclose the 4Fe-4S Mo/W bis-MGD-type domain. Residues C41, C44, C48, and C76 each contribute to the [4Fe-4S] cluster site. Mo-bis(molybdopterin guanine dinucleotide)-binding positions include K78, Q146, N171, C175, 208–215 (WGANMAEM), M416, Q420, N526, 551–552 (SD), K574, D601, and 813–822 (TGRVLEHWHS). Position 889 (W889) interacts with substrate. Mo-bis(molybdopterin guanine dinucleotide)-binding residues include N897 and K914.

Belongs to the prokaryotic molybdopterin-containing oxidoreductase family. NasA/NapA/NarB subfamily. Component of the periplasmic nitrate reductase NapAB complex composed of NapA and NapB. [4Fe-4S] cluster serves as cofactor. It depends on Mo-bis(molybdopterin guanine dinucleotide) as a cofactor. In terms of processing, predicted to be exported by the Tat system. The position of the signal peptide cleavage has not been experimentally proven.

The protein resides in the periplasm. The catalysed reaction is 2 Fe(II)-[cytochrome] + nitrate + 2 H(+) = 2 Fe(III)-[cytochrome] + nitrite + H2O. Functionally, catalytic subunit of the periplasmic nitrate reductase complex NapAB. Receives electrons from NapB and catalyzes the reduction of nitrate to nitrite. The polypeptide is Periplasmic nitrate reductase (Campylobacter jejuni subsp. jejuni serotype O:23/36 (strain 81-176)).